The sequence spans 268 residues: NH(3)-dependent NAD(+) synthetase (268 aa).

46–53 contributes to the ATP binding site; sequence GVSGGQDS. Asp-52 is a Mg(2+) binding site. Residue Arg-140 coordinates deamido-NAD(+). Residue Thr-160 coordinates ATP. Glu-165 provides a ligand contact to Mg(2+). Residues Lys-173 and Asp-180 each coordinate deamido-NAD(+). Lys-189 serves as a coordination point for ATP. 260–261 provides a ligand contact to deamido-NAD(+); sequence HK.

This sequence belongs to the NAD synthetase family. In terms of assembly, homodimer.

It carries out the reaction deamido-NAD(+) + NH4(+) + ATP = AMP + diphosphate + NAD(+) + H(+). Its pathway is cofactor biosynthesis; NAD(+) biosynthesis; NAD(+) from deamido-NAD(+) (ammonia route): step 1/1. Catalyzes the ATP-dependent amidation of deamido-NAD to form NAD. Uses ammonia as a nitrogen source. The protein is NH(3)-dependent NAD(+) synthetase of Buchnera aphidicola subsp. Acyrthosiphon pisum (strain APS) (Acyrthosiphon pisum symbiotic bacterium).